Reading from the N-terminus, the 435-residue chain is Keratin, type I cytoskeletal 18 (435 aa).

The interval 2–84 (SYRPGSYSVS…SVSGSGLVGN (83 aa)) is head. The segment at 85-120 (EKETMIGLNDRLAAYLETVRNLEQANSKLEFQIREA) is coil 1A. Positions 85-396 (EKETMIGLND…RLLDGEDFRL (312 aa)) constitute an IF rod domain. Residues 121 to 137 (LEKKGPTTRDLSPFEKT) form a linker 1 region. The segment at 138 to 229 (LEDLRKKVYD…QNHNQEVNDL (92 aa)) is coil 1B. The linker 12 stretch occupies residues 230–253 (RNQIAQSGVQVDVDAPKGQDLAQV). The coil 2 stretch occupies residues 254–391 (LAEVRAQYES…IATYRRLLDG (138 aa)). The interval 392-435 (EDFRLQDALVDQSSTKSIKKVTVTQTLVDGKVVSESTNTKEIGK) is tail.

This sequence belongs to the intermediate filament family. Heterotetramer of two type I and two type II keratins. Keratin-18 associates with keratin-8. Phosphorylated. In terms of processing, proteolytically cleaved by caspases during epithelial cell apoptosis.

Its function is as follows. When phosphorylated, plays a role in filament reorganization. This is Keratin, type I cytoskeletal 18 from Acipenser baerii (Siberian sturgeon).